The sequence spans 172 residues: MAAAGVTAKAGGGTSAAAASLIRARSPAWPRRAVSCSLARGTGAPKCGSDSTPPPPLPRRRSRARRGHLGNGDRPSAGATVGGEGQASQIGGGGGGGGGRRNATGRGRRRRQGGAGSAVKCRRDSVLEPGLASSPGVAPAGGSGGLWSGAGLCSGLGARGFPGGRRSGRDAG.

A compositionally biased stretch (low complexity) spans 1–28; that stretch reads MAAAGVTAKAGGGTSAAAASLIRARSPA. Residues 1-172 form a disordered region; the sequence is MAAAGVTAKA…GGRRSGRDAG (172 aa). The span at 58-68 shows a compositional bias: basic residues; the sequence is PRRRSRARRGH. A compositionally biased stretch (gly residues) spans 80-100; that stretch reads TVGGEGQASQIGGGGGGGGGR. The segment covering 129 to 138 has biased composition (low complexity); the sequence is PGLASSPGVA. The segment covering 139–165 has biased composition (gly residues); sequence PAGGSGGLWSGAGLCSGLGARGFPGGR.

This is an uncharacterized protein from Homo sapiens (Human).